A 252-amino-acid polypeptide reads, in one-letter code: Triosephosphate isomerase (252 aa).

10 to 12 (NWK) contacts substrate. The active-site Electrophile is His96. Glu168 acts as the Proton acceptor in catalysis. Residues Gly174, Ser214, and 235 to 236 (GG) contribute to the substrate site.

Belongs to the triosephosphate isomerase family. Homodimer.

The protein localises to the cytoplasm. The catalysed reaction is D-glyceraldehyde 3-phosphate = dihydroxyacetone phosphate. It functions in the pathway carbohydrate biosynthesis; gluconeogenesis. The protein operates within carbohydrate degradation; glycolysis; D-glyceraldehyde 3-phosphate from glycerone phosphate: step 1/1. In terms of biological role, involved in the gluconeogenesis. Catalyzes stereospecifically the conversion of dihydroxyacetone phosphate (DHAP) to D-glyceraldehyde-3-phosphate (G3P). The protein is Triosephosphate isomerase of Streptococcus pyogenes serotype M6 (strain ATCC BAA-946 / MGAS10394).